The chain runs to 518 residues: Circadian clock oscillator protein KaiC (518 aa).

The region spanning 1–247 (MTNLPEHQSS…FTINNGINIF (247 aa)) is the KaiC 1 domain. ATP is bound by residues serine 49, glycine 50, threonine 51, glycine 52, lysine 53, threonine 54, and leucine 55. Residue threonine 54 participates in Mg(2+) binding. Glutamate 78 serves as the catalytic Proton acceptor in CI (KaiC 1). Serine 90 is an ATP binding site. Residues 116-123 (QEVAGDFD) form a B-loop, required to bind KaiB and SasA region. Positions 225, 226, 227, 229, and 231 each coordinate ATP. The segment at 248 to 260 (PLGAMRLTQRSSN) is linker. The KaiC 2 domain occupies 261-518 (VRVSSGVKTL…AKGMQDLESE (258 aa)). Residues threonine 290, glycine 291, threonine 292, glycine 293, lysine 294, threonine 295, and leucine 296 each contribute to the ATP site. Threonine 295 is a Mg(2+) binding site. Glutamate 318 is a Mg(2+) binding site. Catalysis depends on glutamate 318, which acts as the Proton acceptor in CII (KaiC 2). Tryptophan 331 contacts ATP. Residue serine 431 is modified to Phosphoserine; by autocatalysis. Position 432 is a phosphothreonine; by autocatalysis (threonine 432). Arginine 451, lysine 457, methionine 458, arginine 459, serine 461, histidine 463, and lysine 465 together coordinate ATP. The A-loop, interacts with KaiA stretch occupies residues 488–497 (GIISGTPTRI).

It belongs to the KaiC family. As to quaternary structure, homohexamer resembling 2 stacked donuts rings with a central pore nearly blocked on one side; hexamerization is dependent on ATP-binding. Binds 2 ATP per monomer, at the subunit interface on each ring. The KaiABC complex composition changes during the circadian cycle to control KaiC phosphorylation. Complexes KaiC(6), KaiA(2-4):KaiC(6), KaiB(6):KaiC(6) and KaiC(6):KaiB(6):KaiA(12) are among the most important forms, many form cooperatively. Interacts with SasA, probably as 1 SasA trimer:1 KaiC homohexamer, has highest affinity for unphosphorylated SasA. The CI domain binds to KaiB and SasA; as they have a similar fold they compete for the same site on CI. KaiB assumes a thioredoxin-like form called KaiB(fs) when bound to KaiC. Mg(2+) serves as cofactor. Post-translationally, phosphorylated on serine/threonine residues by autocatalysis. Both phosphorylated and unphosphorylated forms exist. Both autophosphorylates and autodephosphorylates. Phosphorylated form correlates with clock speed. Phosphorylated on serine and threonine residues by autocatalysis. Has a 4 step phosphorylation cycle; the autokinase acts first on Thr-432, then Ser-431. When Ser-431 is modified KaiC switches to an autophosphatase mode, acting first on phospho-Thr-432 then phospho-Ser-431.

It carries out the reaction L-seryl-[protein] + ATP = O-phospho-L-seryl-[protein] + ADP + H(+). The enzyme catalyses L-threonyl-[protein] + ATP = O-phospho-L-threonyl-[protein] + ADP + H(+). The catalysed reaction is ATP + H2O = ADP + phosphate + H(+). Its activity is regulated as follows. The interaction with KaiA enhances its phosphorylation status, while the interaction with KaiB decreases it. Central component of the KaiABC oscillator complex, which constitutes the main circadian regulator in cyanobacteria. Complex composition changes during the circadian cycle to control KaiC phosphorylation. KaiA stimulates KaiC autophosphorylation, while KaiB sequesters KaiA, leading to KaiC autodephosphorylation. Clock output pathways impact the RpaA transcriptional regulator. KaiC enhances the autophosphorylation activity of SasA, which then transfers its phosphate group to RpaA to activate it. KaiB and KaiC together enhance the phospho-RpaA dephosphatase activity of CikA. Its function is as follows. Stimulates SasA autophosphorylation. Fully phosphorylated KaiC (tested with phosphomimetic Asp-431-432-Asp) is the best stimulant, requires the ATPase activity of the CII domain. Unphosphorylated SasA associates with KaiC and its autophosphorylation activity is enhanced. Phospho-SasA is released and associates with RpaA, transferring its phosphate group. Formation of the KaiA:KaiB complex is promoted by KaiC, helping switch KaiC from its autophosphorylation to autodephosphatase function. Functionally, has a weak, temperature-independent ATPase activity (about 14 molecules of ATP per day) that defines the circadian period. ATPase activity is mostly contributed by the CI domain; the CII domain augments the activity. The addition of KaiA increases activity. ATPase is inhibited during the KaiC phosphorylating phase and activated during the KaiC dephosphorylating phase. In Thermosynechococcus vestitus (strain NIES-2133 / IAM M-273 / BP-1), this protein is Circadian clock oscillator protein KaiC.